The chain runs to 216 residues: Proenkephalin-A-B (216 aa).

5 propeptides span residues 64-85, 93-131, 144-155, 165-175, and 183-207; these read MDEL…LAKN, EYDS…GEMN, STDLEDETRGIQ, VGRPEWWQDYQ, and TRFT…PDME. Residues 114 to 133 are disordered; sequence PESAIYHDNNSETPGEMNKR.

This sequence belongs to the opioid neuropeptide precursor family. In terms of processing, the N-terminal domain contains 6 conserved cysteines thought to be involved in disulfide bonding and/or processing.

It localises to the secreted. In terms of biological role, enkephalin neuropeptides compete with and mimic the effects of opiate drugs. They play a role in a number of physiologic functions, including pain perception and responses to stress. The chain is Proenkephalin-A-B (penk-b) from Xenopus laevis (African clawed frog).